A 509-amino-acid chain; its full sequence is Taxoid 14-beta-hydroxylase (509 aa).

3 helical membrane passes run 20 to 40 (AILF…LLFL), 186 to 206 (SVVA…FFNI), and 218 to 238 (LLEI…GFAY). Residue Cys-443 participates in heme binding.

The protein belongs to the cytochrome P450 family.

It localises to the microsome membrane. The catalysed reaction is 10beta-hydroxytaxa-4(20),11-dien-5alpha-yl acetate + NADPH + O2 + H(+) = 10beta,14beta-dihydroxytaxa-4(20),11-dien-5alpha-yl acetate + NADP(+) + H2O. The protein operates within alkaloid biosynthesis; taxol biosynthesis. Catalyzes the conversion of 5-alpha-acetoxy-10beta-ol to 5-alpha-acetoxy-10beta,14beta-dihydroxy taxadiene. Also acts on taxa-4(20),11-dien-5-alpha-yl acetate. The sequence is that of Taxoid 14-beta-hydroxylase from Taxus cuspidata (Japanese yew).